Here is a 354-residue protein sequence, read N- to C-terminus: MALVSMRQLLDHAADDSYGLPAFNVNNMEQVKAIMDAARATSSPVILQGSAGARKYAGEPFLRHLIAAAVEAYPEIPVVMHQDHGASPAVCMGAIKSGFSSVMMDGSLKEDGKTPADYDYNVSVTAKVVELAHAVGVSVEGELGCLGSLETGKGEAEDGHGAEEALDHSKLLTDPDEAAQFVKATQCDALAIAIGTSHGAYKFTRKPTGDILAIDRIKAIHQRIPTTHLVMHGSSSVPQELLEEIRTYGGDIKETYGVPVEEIQEGIRYGVRKVNIDTDIRLAMTAAIRRVGAKNKSEFDPRKFMAAAMEEAKKVCIARFEAFGSAGKAEKIRAIELDEMAKRYASGELAQVVH.

Residue S50 participates in D-glyceraldehyde 3-phosphate binding. D83 functions as the Proton donor in the catalytic mechanism. 4 residues coordinate Zn(2+): H84, D105, E142, and H198. G199 is a dihydroxyacetone phosphate binding site. H232 contacts Zn(2+). Dihydroxyacetone phosphate is bound by residues 233–235 (GSS) and 275–278 (NIDT).

Belongs to the class II fructose-bisphosphate aldolase family. In terms of assembly, homodimer. The cofactor is Zn(2+).

The catalysed reaction is beta-D-fructose 1,6-bisphosphate = D-glyceraldehyde 3-phosphate + dihydroxyacetone phosphate. It functions in the pathway carbohydrate biosynthesis; Calvin cycle. The protein operates within carbohydrate degradation; glycolysis; D-glyceraldehyde 3-phosphate and glycerone phosphate from D-glucose: step 4/4. With respect to regulation, activity is stimulated by Fe(2+) in autotrophically grown cells. Catalyzes the aldol condensation of dihydroxyacetone phosphate (DHAP or glycerone-phosphate) with glyceraldehyde 3-phosphate (G3P) to form fructose 1,6-bisphosphate (FBP) in gluconeogenesis and the reverse reaction in glycolysis. In Xanthobacter flavus, this protein is Fructose-bisphosphate aldolase.